Reading from the N-terminus, the 89-residue chain is Cell division topological specificity factor (89 aa).

Belongs to the MinE family.

Functionally, prevents the cell division inhibition by proteins MinC and MinD at internal division sites while permitting inhibition at polar sites. This ensures cell division at the proper site by restricting the formation of a division septum at the midpoint of the long axis of the cell. In Pectobacterium atrosepticum (strain SCRI 1043 / ATCC BAA-672) (Erwinia carotovora subsp. atroseptica), this protein is Cell division topological specificity factor.